A 204-amino-acid chain; its full sequence is Pyridoxal 5'-phosphate synthase subunit PdxT (204 aa).

52–54 (GES) is an L-glutamine binding site. Catalysis depends on Cys-84, which acts as the Nucleophile. L-glutamine-binding positions include Arg-116 and 143 to 144 (IR). Residues His-184 and Glu-186 each act as charge relay system in the active site.

It belongs to the glutaminase PdxT/SNO family. In terms of assembly, in the presence of PdxS, forms a dodecamer of heterodimers. Only shows activity in the heterodimer.

It carries out the reaction aldehydo-D-ribose 5-phosphate + D-glyceraldehyde 3-phosphate + L-glutamine = pyridoxal 5'-phosphate + L-glutamate + phosphate + 3 H2O + H(+). The catalysed reaction is L-glutamine + H2O = L-glutamate + NH4(+). It functions in the pathway cofactor biosynthesis; pyridoxal 5'-phosphate biosynthesis. Functionally, catalyzes the hydrolysis of glutamine to glutamate and ammonia as part of the biosynthesis of pyridoxal 5'-phosphate. The resulting ammonia molecule is channeled to the active site of PdxS. The polypeptide is Pyridoxal 5'-phosphate synthase subunit PdxT (Pyrobaculum aerophilum (strain ATCC 51768 / DSM 7523 / JCM 9630 / CIP 104966 / NBRC 100827 / IM2)).